The chain runs to 257 residues: Flagellar brake protein YcgR 2 (257 aa).

Positions 131-244 (QRREFFRVQT…AERTLQRVVT (114 aa)) constitute a PilZ domain.

The protein belongs to the YcgR family. Monomer. Interacts with the flagellar basal bodies.

It is found in the bacterial flagellum basal body. Its function is as follows. Acts as a flagellar brake, regulating swimming and swarming in a bis-(3'-5') cyclic diguanylic acid (c-di-GMP)-dependent manner. Binds 1 c-di-GMP dimer per subunit. Increasing levels of c-di-GMP lead to decreased motility. This Paraburkholderia phytofirmans (strain DSM 17436 / LMG 22146 / PsJN) (Burkholderia phytofirmans) protein is Flagellar brake protein YcgR 2.